A 178-amino-acid polypeptide reads, in one-letter code: Transcriptional repressor NrdR (178 aa).

The tract at residues 1 to 21 is disordered; sequence MRCPFCGHEDTQVKDSRPHED. Residues 3-34 fold into a zinc finger; that stretch reads CPFCGHEDTQVKDSRPHEDGAAIRRRRICAAC. A compositionally biased stretch (basic and acidic residues) spans 7 to 21; it reads GHEDTQVKDSRPHED. One can recognise an ATP-cone domain in the interval 49–139; the sequence is LYVVKADDRR…VHWDFRETKD (91 aa).

The protein belongs to the NrdR family. Zn(2+) serves as cofactor.

Functionally, negatively regulates transcription of bacterial ribonucleotide reductase nrd genes and operons by binding to NrdR-boxes. The sequence is that of Transcriptional repressor NrdR from Gluconacetobacter diazotrophicus (strain ATCC 49037 / DSM 5601 / CCUG 37298 / CIP 103539 / LMG 7603 / PAl5).